The following is a 584-amino-acid chain: 2-succinyl-5-enolpyruvyl-6-hydroxy-3-cyclohexene-1-carboxylate synthase (584 aa).

It belongs to the TPP enzyme family. MenD subfamily. As to quaternary structure, homodimer. The cofactor is Mg(2+). Mn(2+) is required as a cofactor. It depends on thiamine diphosphate as a cofactor.

The enzyme catalyses isochorismate + 2-oxoglutarate + H(+) = 5-enolpyruvoyl-6-hydroxy-2-succinyl-cyclohex-3-ene-1-carboxylate + CO2. It participates in quinol/quinone metabolism; 1,4-dihydroxy-2-naphthoate biosynthesis; 1,4-dihydroxy-2-naphthoate from chorismate: step 2/7. Its pathway is quinol/quinone metabolism; menaquinone biosynthesis. In terms of biological role, catalyzes the thiamine diphosphate-dependent decarboxylation of 2-oxoglutarate and the subsequent addition of the resulting succinic semialdehyde-thiamine pyrophosphate anion to isochorismate to yield 2-succinyl-5-enolpyruvyl-6-hydroxy-3-cyclohexene-1-carboxylate (SEPHCHC). The polypeptide is 2-succinyl-5-enolpyruvyl-6-hydroxy-3-cyclohexene-1-carboxylate synthase (Bacillus thuringiensis subsp. konkukian (strain 97-27)).